The primary structure comprises 272 residues: Putative pyruvate, phosphate dikinase regulatory protein (272 aa).

Residue 153–160 (GVSRTSKT) participates in ADP binding.

Belongs to the pyruvate, phosphate/water dikinase regulatory protein family. PDRP subfamily.

It carries out the reaction N(tele)-phospho-L-histidyl/L-threonyl-[pyruvate, phosphate dikinase] + ADP = N(tele)-phospho-L-histidyl/O-phospho-L-threonyl-[pyruvate, phosphate dikinase] + AMP + H(+). The catalysed reaction is N(tele)-phospho-L-histidyl/O-phospho-L-threonyl-[pyruvate, phosphate dikinase] + phosphate + H(+) = N(tele)-phospho-L-histidyl/L-threonyl-[pyruvate, phosphate dikinase] + diphosphate. Bifunctional serine/threonine kinase and phosphorylase involved in the regulation of the pyruvate, phosphate dikinase (PPDK) by catalyzing its phosphorylation/dephosphorylation. This chain is Putative pyruvate, phosphate dikinase regulatory protein, found in Streptococcus sanguinis (strain SK36).